The chain runs to 221 residues: Octanoyltransferase (221 aa).

The region spanning 14–202 (GVRPDTLWFL…MLGARNAPHP (189 aa)) is the BPL/LPL catalytic domain. Substrate contacts are provided by residues 54-61 (RGGLLTYH), 128-130 (SIG), and 141-143 (GFA). C159 functions as the Acyl-thioester intermediate in the catalytic mechanism. The disordered stretch occupies residues 197–221 (RNAPHPPAPNLSSGDLGTGTRAGRT).

The protein belongs to the LipB family.

The protein resides in the cytoplasm. The enzyme catalyses octanoyl-[ACP] + L-lysyl-[protein] = N(6)-octanoyl-L-lysyl-[protein] + holo-[ACP] + H(+). It functions in the pathway protein modification; protein lipoylation via endogenous pathway; protein N(6)-(lipoyl)lysine from octanoyl-[acyl-carrier-protein]: step 1/2. Functionally, catalyzes the transfer of endogenously produced octanoic acid from octanoyl-acyl-carrier-protein onto the lipoyl domains of lipoate-dependent enzymes. Lipoyl-ACP can also act as a substrate although octanoyl-ACP is likely to be the physiological substrate. The polypeptide is Octanoyltransferase (Frankia casuarinae (strain DSM 45818 / CECT 9043 / HFP020203 / CcI3)).